The sequence spans 201 residues: Peptide deformylase (201 aa).

The span at 1–17 shows a compositional bias: polar residues; the sequence is MANNFSQLARKSKTNSP. Residues 1 to 24 are disordered; that stretch reads MANNFSQLARKSKTNSPIEKVSKE. Fe cation is bound by residues Cys121 and His163. Residue Glu164 is part of the active site. His167 contacts Fe cation.

The protein belongs to the polypeptide deformylase family. The cofactor is Fe(2+).

It catalyses the reaction N-terminal N-formyl-L-methionyl-[peptide] + H2O = N-terminal L-methionyl-[peptide] + formate. Its function is as follows. Removes the formyl group from the N-terminal Met of newly synthesized proteins. Requires at least a dipeptide for an efficient rate of reaction. N-terminal L-methionine is a prerequisite for activity but the enzyme has broad specificity at other positions. The polypeptide is Peptide deformylase (Prochlorococcus marinus subsp. pastoris (strain CCMP1986 / NIES-2087 / MED4)).